The sequence spans 243 residues: Secreted RxLR effector protein 28 (243 aa).

A signal peptide spans 1-26 (MHVSRIIAHIALATAITATTVSPTDA). The RxLR signature appears at 49–52 (RGLR). Positions 187–243 (NVDEDKGQNFGHSVSGPPTTTLTGPHTKSGIPPFENLVAPAKGSMPNTRRNGYQFFE) are disordered. The segment covering 199 to 216 (SVSGPPTTTLTGPHTKSG) has biased composition (low complexity).

The protein belongs to the RxLR effector family.

The protein localises to the secreted. The protein resides in the host cytoplasm. Its subcellular location is the host nucleus. Its function is as follows. Effector that significantly enhances susceptibilities of grapevine and tobacco to pathogens. Acts as a broad suppressor of cell death to interrupt plant immunity. Completely inhibits cell death induced by cell death-inducing proteins, including the PAMP elicitor INF1 from P.infestans. Reduces the transcriptional levels of the defense-related genes and impairs the H(2)O(2) accumulation in N.benthamiana. The polypeptide is Secreted RxLR effector protein 28 (Plasmopara viticola (Downy mildew of grapevine)).